The chain runs to 545 residues: ATP synthase subunit alpha (545 aa).

173–180 provides a ligand contact to ATP; it reads GDRQTGKT.

It belongs to the ATPase alpha/beta chains family. In terms of assembly, F-type ATPases have 2 components, CF(1) - the catalytic core - and CF(0) - the membrane proton channel. CF(1) has five subunits: alpha(3), beta(3), gamma(1), delta(1), epsilon(1). CF(0) has three main subunits: a(1), b(2) and c(9-12). The alpha and beta chains form an alternating ring which encloses part of the gamma chain. CF(1) is attached to CF(0) by a central stalk formed by the gamma and epsilon chains, while a peripheral stalk is formed by the delta and b chains.

It localises to the cell membrane. It catalyses the reaction ATP + H2O + 4 H(+)(in) = ADP + phosphate + 5 H(+)(out). In terms of biological role, produces ATP from ADP in the presence of a proton gradient across the membrane. The alpha chain is a regulatory subunit. The chain is ATP synthase subunit alpha from Paenarthrobacter aurescens (strain TC1).